We begin with the raw amino-acid sequence, 209 residues long: Kinetochore protein Spc25 (209 aa).

Residues 74–107 adopt a coiled-coil conformation; that stretch reads TRAVREKLAEERQKNAEMQAQLEKANDERIEQMD.

Belongs to the SPC25 family. In terms of assembly, component of the Ndc80 complex, which is composed of Ndc80, Nuf2 and Spc25.

The protein resides in the nucleus. It localises to the chromosome. The protein localises to the centromere. It is found in the kinetochore. Its function is as follows. Acts as a component of the essential kinetochore-associated Ndc80 complex, which is required for chromosome segregation and spindle checkpoint activity during meiosis and mitosis. Required for kinetochore integrity and the organization of stable microtubule binding sites in the outer plate of the kinetochore. Participates in SAC signaling that responds specifically to disruptions in spindle microtubule dynamics. The NDC80 complex synergistically enhances the affinity of the SKA1 complex for microtubules and may allow the NDC80 complex to track depolymerizing microtubules. The chain is Kinetochore protein Spc25 from Drosophila grimshawi (Hawaiian fruit fly).